A 193-amino-acid chain; its full sequence is NADH-quinone oxidoreductase subunit B (193 aa).

A disordered region spans residues 1-25 (MGLNDSSGTLVAPKPKGIIDPNTGR). Residues C72, C73, C137, and C167 each contribute to the [4Fe-4S] cluster site.

It belongs to the complex I 20 kDa subunit family. As to quaternary structure, NDH-1 is composed of 14 different subunits. Subunits NuoB, C, D, E, F, and G constitute the peripheral sector of the complex. Requires [4Fe-4S] cluster as cofactor.

Its subcellular location is the cell inner membrane. The enzyme catalyses a quinone + NADH + 5 H(+)(in) = a quinol + NAD(+) + 4 H(+)(out). In terms of biological role, NDH-1 shuttles electrons from NADH, via FMN and iron-sulfur (Fe-S) centers, to quinones in the respiratory chain. Couples the redox reaction to proton translocation (for every two electrons transferred, four hydrogen ions are translocated across the cytoplasmic membrane), and thus conserves the redox energy in a proton gradient. This Mesorhizobium japonicum (strain LMG 29417 / CECT 9101 / MAFF 303099) (Mesorhizobium loti (strain MAFF 303099)) protein is NADH-quinone oxidoreductase subunit B.